The primary structure comprises 419 residues: eIF5-mimic protein 2 (419 aa).

Residue methionine 1 is modified to N-acetylmethionine. Over residues 1–15 (MNNQKQQKPTLSGQR) the composition is skewed to polar residues. The interval 1 to 26 (MNNQKQQKPTLSGQRFKTRKRDEKER) is disordered. Serine 12 is modified (phosphoserine). Residues 247–414 (NQQTIGARKE…KNAEEESESE (168 aa)) form the W2 domain. Lysine 368 is covalently cross-linked (Glycyl lysine isopeptide (Lys-Gly) (interchain with G-Cter in SUMO2)). A phosphoserine mark is found at serine 411 and serine 413.

It belongs to the BZW family.

Its function is as follows. Translation initiation regulator which represses repeat-associated non-AUG (RAN) initiated translation probably by acting as a competitive inhibitor of eukaryotic translation initiation factor 5 (EIF5) function. Enhances histone H4 gene transcription but does not seem to bind DNA directly. The chain is eIF5-mimic protein 2 (BZW1) from Homo sapiens (Human).